We begin with the raw amino-acid sequence, 348 residues long: Nicotinate-nucleotide--dimethylbenzimidazole phosphoribosyltransferase (348 aa).

The active-site Proton acceptor is the glutamate 316.

It belongs to the CobT family.

It carries out the reaction 5,6-dimethylbenzimidazole + nicotinate beta-D-ribonucleotide = alpha-ribazole 5'-phosphate + nicotinate + H(+). The protein operates within nucleoside biosynthesis; alpha-ribazole biosynthesis; alpha-ribazole from 5,6-dimethylbenzimidazole: step 1/2. Functionally, catalyzes the synthesis of alpha-ribazole-5'-phosphate from nicotinate mononucleotide (NAMN) and 5,6-dimethylbenzimidazole (DMB). The chain is Nicotinate-nucleotide--dimethylbenzimidazole phosphoribosyltransferase from Xanthomonas euvesicatoria pv. vesicatoria (strain 85-10) (Xanthomonas campestris pv. vesicatoria).